The sequence spans 166 residues: Ribosome maturation factor RimM (166 aa).

Positions Glu94 to Gln166 constitute a PRC barrel domain.

This sequence belongs to the RimM family. In terms of assembly, binds ribosomal protein uS19.

It localises to the cytoplasm. Functionally, an accessory protein needed during the final step in the assembly of 30S ribosomal subunit, possibly for assembly of the head region. Essential for efficient processing of 16S rRNA. May be needed both before and after RbfA during the maturation of 16S rRNA. It has affinity for free ribosomal 30S subunits but not for 70S ribosomes. This chain is Ribosome maturation factor RimM, found in Novosphingobium aromaticivorans (strain ATCC 700278 / DSM 12444 / CCUG 56034 / CIP 105152 / NBRC 16084 / F199).